Here is a 138-residue protein sequence, read N- to C-terminus: uncharacterized protein (138 aa).

2 disordered regions span residues 1 to 23 (MPES…MLSE) and 35 to 83 (ASPS…EDPV). Acidic residues predominate over residues 60–69 (DEETIPEEDD).

This is an uncharacterized protein from Schizosaccharomyces pombe (strain 972 / ATCC 24843) (Fission yeast).